The following is a 107-amino-acid chain: Ferredoxin (107 aa).

2 4Fe-4S ferredoxin-type domains span residues 2 to 30 and 31 to 60; these read TYVVTDECVKCKYTDCVEVCPVDCFYEGE and FMLVINPDECIDCGVCVPDCPIDAIKPETP. Cys-9 and Cys-17 together coordinate [3Fe-4S] cluster. The [4Fe-4S] cluster site is built by Cys-21, Cys-40, Cys-43, and Cys-46. A [3Fe-4S] cluster-binding site is contributed by Cys-50.

Requires [4Fe-4S] cluster as cofactor. [3Fe-4S] cluster serves as cofactor.

Its function is as follows. Ferredoxins are iron-sulfur proteins that transfer electrons in a wide variety of metabolic reactions. The protein is Ferredoxin (fdxA) of Rickettsia bellii (strain RML369-C).